A 138-amino-acid polypeptide reads, in one-letter code: MSRLVYFSSVSENTHRFVAKLGLAADRIPLRPTEPFLRAEDEYVLIVPTYGGGNGLGAVPKQVIKFLNDPGNRSLVRGVIAAGNTNFGEAFCIAGDIIAAKCDVPYLYRFELLGTDQDVLRVREGLGRFWLQRSQIPA.

It belongs to the NrdI family.

In terms of biological role, probably involved in ribonucleotide reductase function. The protein is Protein NrdI of Beutenbergia cavernae (strain ATCC BAA-8 / DSM 12333 / CCUG 43141 / JCM 11478 / NBRC 16432 / NCIMB 13614 / HKI 0122).